The chain runs to 118 residues: uncharacterized protein (118 aa).

The protein to E.coli YeaO.

This is an uncharacterized protein from Mycobacterium bovis (strain ATCC BAA-935 / AF2122/97).